We begin with the raw amino-acid sequence, 251 residues long: 2,3-bisphosphoglycerate-dependent phosphoglycerate mutase (251 aa).

Substrate is bound by residues 13–20 (RHGESEWN), 26–27 (TG), Arg65, 92–95 (ERHY), Lys103, 119–120 (RR), and 186–187 (GN). Residue His14 is the Tele-phosphohistidine intermediate of the active site. The active-site Proton donor/acceptor is the Glu92.

Belongs to the phosphoglycerate mutase family. BPG-dependent PGAM subfamily.

The catalysed reaction is (2R)-2-phosphoglycerate = (2R)-3-phosphoglycerate. Its pathway is carbohydrate degradation; glycolysis; pyruvate from D-glyceraldehyde 3-phosphate: step 3/5. Functionally, catalyzes the interconversion of 2-phosphoglycerate and 3-phosphoglycerate. The polypeptide is 2,3-bisphosphoglycerate-dependent phosphoglycerate mutase (Rhodococcus opacus (strain B4)).